The chain runs to 181 residues: Protein Syd (181 aa).

This sequence belongs to the Syd family.

It is found in the cell inner membrane. Its function is as follows. Interacts with the SecY protein in vivo. May bind preferentially to an uncomplexed state of SecY, thus functioning either as a chelating agent for excess SecY in the cell or as a regulatory factor that negatively controls the translocase function. In Salmonella arizonae (strain ATCC BAA-731 / CDC346-86 / RSK2980), this protein is Protein Syd.